A 341-amino-acid chain; its full sequence is Serine proteinase inhibitor 2 (341 aa).

Belongs to the serpin family. Poxviruses subfamily.

The protein resides in the host cytoplasm. Functionally, viral serpin that inhibits both cysteine and serine proteinases involved in the regulation of host inflammatory and apoptosis processes. Major anti-apoptotic protein which inhibits both intrinsic and extrinsic pathways and strongly cleaves host CASP1 and CASP8 but is a rather poor inhibitor of host CASP3. Prevents the proteolytic activity of host interleukin-1-beta converting enzyme (ICE) and ICE-like enzymes. Can also block apoptosis through host tumor necrosis factor (TNF) receptor. This Bos taurus (Bovine) protein is Serine proteinase inhibitor 2 (OPG199).